We begin with the raw amino-acid sequence, 417 residues long: mRNA export factor ICP27 homolog (417 aa).

Acidic residues predominate over residues 1 to 28 (MEDIIEGGISSDDDFDSSDSSSDEEESD). The tract at residues 1 to 143 (MEDIIEGGIS…NGPLRNGPPR (143 aa)) is disordered. The interval 64–120 (RQRSPITWEHQSPLSRVYRSPSPMRFGKRPRISSNSTSRSCKTSWADRVREAAAQRR) is interaction with RNA. Residues 88-94 (RFGKRPR) carry the Nuclear localization signal motif. The segment covering 96–107 (SSNSTSRSCKTS) has biased composition (low complexity). The segment at 106–120 (TSWADRVREAAAQRR) is interaction with host ALYREF or mouse ALYREF2. Over residues 108 to 117 (WADRVREAAA) the composition is skewed to basic and acidic residues. The Nuclear localization signal motif lies at 118–127 (QRRPSRPFRK). Residues 120–130 (RPSRPFRKPYS) show a composition bias toward basic residues. The segment covering 132–141 (PRNGPLRNGP) has biased composition (low complexity). Zn(2+)-binding residues include Cys295, His385, Cys389, and Cys394. The CHC2-type zinc-finger motif lies at 295-394 (CLMQTTPQDH…HLNKCPSSTC (100 aa)).

The protein belongs to the HHV-1 ICP27 protein family. As to quaternary structure, homodimer. Homodimerization is required for transactivation. Interacts with host ALYREF and with mouse ALYREF2. Associates in a complex with RNA, and host export factors NXF1/TAP and ALYREF or ALYREF2; these interactions allow nuclear export of viral transcripts.

It is found in the host cytoplasm. The protein resides in the host nucleus. Functionally, probably acts as a viral splicing factor that regulates viral RNA splicing. Functions as a multifunctional regulator of the expression of viral lytic genes. Early protein that promotes the accumulation and nuclear export of viral intronless RNA transcripts by interacting with mRNAs and cellular export proteins. The sequence is that of mRNA export factor ICP27 homolog (EJRF1) from Saimiriine herpesvirus 2 (strain 11) (SaHV-2).